The primary structure comprises 126 residues: Nascent polypeptide-associated complex protein (126 aa).

The region spanning 10–77 (PRMMKQMQKM…AKKVAKAEEK (68 aa)) is the NAC-A/B domain.

It belongs to the NAC-alpha family. In terms of assembly, homodimer. Interacts with the ribosome. Binds ribosomal RNA.

In terms of biological role, contacts the emerging nascent chain on the ribosome. This is Nascent polypeptide-associated complex protein from Methanococcus maripaludis (strain C6 / ATCC BAA-1332).